The primary structure comprises 140 residues: Probable prefoldin subunit 6 (140 aa).

This sequence belongs to the prefoldin subunit beta family. As to quaternary structure, heterohexamer of two PFD-alpha type and four PFD-beta type subunits.

Functionally, binds specifically to cytosolic chaperonin (c-CPN) and transfers target proteins to it. Binds to nascent polypeptide chain and promotes folding in an environment in which there are many competing pathways for nonnative proteins. This chain is Probable prefoldin subunit 6 (pfdn6), found in Dictyostelium discoideum (Social amoeba).